The chain runs to 379 residues: MLCLLKLIVIPVILAPVGYPQGLPGLTVSSPQLRVHVGESVLMGCVVQRTEEKHVDRVDWLFSKDKDDASEYVLFYYSNLSVPTGRFQNRSHLVGDTFHNDGSLLLQDVQKADEGIYTCEIRLKNESMVMKKPVELWVLPEEPKDLRVRVGDTTQMRCSIQSTEEKRVTKVNWMFSSGSHTEEETVLSYDSNMRSGKFQSLGRFRNRVDLTGDISRNDGSIKLQTVKESDQGIYTCSIYVGKLESRKTIVLHVVQDEFQRTISPTPPTDKGQQGILNGNQLVIIVGIVCATFLLLPVLILIVKKAKWNKSSVSSMASVKSLENKEKINPEKHIYSSITTWETTERGISGESEGTYMTMNPVWPSSPKASSLVRSSVRSK.

The N-terminal stretch at 1-20 is a signal peptide; that stretch reads MLCLLKLIVIPVILAPVGYP. The Extracellular portion of the chain corresponds to 21–281; it reads QGLPGLTVSS…QQGILNGNQL (261 aa). Ig-like V-type domains lie at 24-135 and 140-250; these read PGLT…KPVE and PEEP…KTIV. A disulfide bridge links Cys-45 with Cys-119. N-linked (GlcNAc...) asparagine glycans are attached at residues Asn-79, Asn-89, and Asn-125. Cys-158 and Cys-236 are disulfide-bonded. A helical transmembrane segment spans residues 282-302; it reads VIIVGIVCATFLLLPVLILIV. Residues 303-379 are Cytoplasmic-facing; sequence KKAKWNKSSV…SLVRSSVRSK (77 aa). Tyr-355 is modified (phosphotyrosine).

This sequence belongs to the immunoglobulin superfamily. Homodimer; active form in leukocyte-endothelial cell adhesion. Interacts (homodimeric form) with CXADR. Interacts (via cytoplasmic domain) with the PI3 kinase; upon CXADR-binding. Interacts with ITGA4 and ITGB1; integrin alpha-4/beta-1 may regulate leukocyte to endothelial cells adhesion by controlling JAML homodimerization. As to expression, expressed by gamma-delta intraepithelial T cells (at protein level).

The protein localises to the cell membrane. It localises to the cell junction. Functionally, transmembrane protein of the plasma membrane of leukocytes that control their migration and activation through interaction with CXADR, a plasma membrane receptor found on adjacent epithelial and endothelial cells. The interaction between both receptors mediates the activation of gamma-delta T-cells, a subpopulation of T-cells residing in epithelia and involved in tissue homeostasis and repair. Upon epithelial CXADR-binding, JAML induces downstream cell signaling events in gamma-delta T-cells through PI3-kinase and MAP kinases. It results in proliferation and production of cytokines and growth factors by T-cells that in turn stimulate epithelial tissues repair. It also controls the transmigration of leukocytes within epithelial and endothelial tissues through adhesive interactions with epithelial and endothelial CXADR. This Mus musculus (Mouse) protein is Junctional adhesion molecule-like.